The chain runs to 114 residues: Hemerythrin (114 aa).

The Fe cation site is built by His26, His55, Glu59, His74, His78, His102, and Asp107.

It belongs to the hemerythrin family. As to quaternary structure, homooctamer.

Its function is as follows. Hemerythrin is a respiratory protein in blood cells of certain marine worms. The oxygen-binding site in each chain contains two iron atoms. The chain is Hemerythrin from Phascolopsis gouldii (Peanut worm).